A 152-amino-acid chain; its full sequence is Xanthine-guanine phosphoribosyltransferase (152 aa).

Residues 37–38, R69, and 88–96 each bind 5-phospho-alpha-D-ribose 1-diphosphate; these read RG and DDLVDTGGT. Residue R69 participates in GMP binding. D89 serves as a coordination point for Mg(2+). Guanine is bound by residues D92 and I135. Xanthine contacts are provided by D92 and I135. GMP contacts are provided by residues 92 to 96 and 134 to 135; these read DTGGT and WI.

It belongs to the purine/pyrimidine phosphoribosyltransferase family. XGPT subfamily. Homotetramer. Mg(2+) serves as cofactor.

The protein localises to the cell inner membrane. The catalysed reaction is GMP + diphosphate = guanine + 5-phospho-alpha-D-ribose 1-diphosphate. It catalyses the reaction XMP + diphosphate = xanthine + 5-phospho-alpha-D-ribose 1-diphosphate. The enzyme catalyses IMP + diphosphate = hypoxanthine + 5-phospho-alpha-D-ribose 1-diphosphate. It participates in purine metabolism; GMP biosynthesis via salvage pathway; GMP from guanine: step 1/1. The protein operates within purine metabolism; XMP biosynthesis via salvage pathway; XMP from xanthine: step 1/1. Functionally, purine salvage pathway enzyme that catalyzes the transfer of the ribosyl-5-phosphate group from 5-phospho-alpha-D-ribose 1-diphosphate (PRPP) to the N9 position of the 6-oxopurines guanine and xanthine to form the corresponding ribonucleotides GMP (guanosine 5'-monophosphate) and XMP (xanthosine 5'-monophosphate), with the release of PPi. To a lesser extent, also acts on hypoxanthine. This chain is Xanthine-guanine phosphoribosyltransferase, found in Photobacterium profundum (strain SS9).